The chain runs to 347 residues: N-acetyl-gamma-glutamyl-phosphate reductase (347 aa).

Cys-152 is a catalytic residue.

Belongs to the NAGSA dehydrogenase family. Type 1 subfamily.

The protein resides in the cytoplasm. The catalysed reaction is N-acetyl-L-glutamate 5-semialdehyde + phosphate + NADP(+) = N-acetyl-L-glutamyl 5-phosphate + NADPH + H(+). The protein operates within amino-acid biosynthesis; L-arginine biosynthesis; N(2)-acetyl-L-ornithine from L-glutamate: step 3/4. Catalyzes the NADPH-dependent reduction of N-acetyl-5-glutamyl phosphate to yield N-acetyl-L-glutamate 5-semialdehyde. The chain is N-acetyl-gamma-glutamyl-phosphate reductase from Neisseria meningitidis serogroup C / serotype 2a (strain ATCC 700532 / DSM 15464 / FAM18).